Here is a 72-residue protein sequence, read N- to C-terminus: MDSLRPVVVVNWIQINFHIDIVKGITGYGFAFICGRDGVRICSETTRRTDDVSGYSVSYSTFCLGNTCLASG.

This is an uncharacterized protein from Vaccinia virus (strain Western Reserve) (VACV).